Here is a 228-residue protein sequence, read N- to C-terminus: PKHD-type hydroxylase xcc-b100_1388 (228 aa).

The 103-residue stretch at 78–180 folds into the Fe2OG dioxygenase domain; it reads RIYPPLFNRY…RVASFFWIQS (103 aa). 3 residues coordinate Fe cation: His-96, Asp-98, and His-161. Arg-171 serves as a coordination point for 2-oxoglutarate.

Fe(2+) serves as cofactor. Requires L-ascorbate as cofactor.

The protein is PKHD-type hydroxylase xcc-b100_1388 of Xanthomonas campestris pv. campestris (strain B100).